Consider the following 353-residue polypeptide: Protein-glutamate methylesterase/protein-glutamine glutaminase 4 (353 aa).

Positions 7–124 (RILVAEDSPT…SPDFDADSRR (118 aa)) constitute a Response regulatory domain. Aspartate 58 is modified (4-aspartylphosphate). The 193-residue stretch at 158-350 (PVSPTRPGVV…SRLTSAFRGS (193 aa)) folds into the CheB-type methylesterase domain. Active-site residues include serine 172, histidine 199, and aspartate 292.

Belongs to the CheB family. In terms of processing, phosphorylated by CheA. Phosphorylation of the N-terminal regulatory domain activates the methylesterase activity.

It is found in the cytoplasm. The enzyme catalyses [protein]-L-glutamate 5-O-methyl ester + H2O = L-glutamyl-[protein] + methanol + H(+). The catalysed reaction is L-glutaminyl-[protein] + H2O = L-glutamyl-[protein] + NH4(+). Its function is as follows. Involved in chemotaxis. Part of a chemotaxis signal transduction system that modulates chemotaxis in response to various stimuli. Catalyzes the demethylation of specific methylglutamate residues introduced into the chemoreceptors (methyl-accepting chemotaxis proteins or MCP) by CheR. Also mediates the irreversible deamidation of specific glutamine residues to glutamic acid. The sequence is that of Protein-glutamate methylesterase/protein-glutamine glutaminase 4 from Myxococcus xanthus (strain DK1622).